Here is a 220-residue protein sequence, read N- to C-terminus: Metalloproteinase inhibitor 2 (220 aa).

The first 26 residues, 1 to 26, serve as a signal peptide directing secretion; the sequence is MGAAARSLRLALGLLLLATLLRPADA. Residue Cys-27 coordinates Zn(2+). Involved in metalloproteinase-binding stretches follow at residues 27–30 and 95–96; these read CSCS and SA. 6 disulfide bridges follow: Cys-27-Cys-98, Cys-29-Cys-127, Cys-39-Cys-152, Cys-154-Cys-201, Cys-159-Cys-164, and Cys-172-Cys-193. One can recognise an NTR domain in the interval 27–152; the sequence is CSCSPVHPQQ…SLNHRYQMGC (126 aa).

The protein belongs to the protease inhibitor I35 (TIMP) family. As to quaternary structure, interacts (via the C-terminal) with MMP2 (via the C-terminal PEX domain); the interaction inhibits the MMP2 activity. In terms of processing, the activity of TIMP2 is dependent on the presence of disulfide bonds.

The protein resides in the secreted. In terms of biological role, complexes with metalloproteinases (such as collagenases) and irreversibly inactivates them by binding to their catalytic zinc cofactor. The chain is Metalloproteinase inhibitor 2 (Timp2) from Rattus norvegicus (Rat).